The chain runs to 196 residues: Large ribosomal subunit protein uL18 (196 aa).

The protein belongs to the universal ribosomal protein uL18 family. Part of the 50S ribosomal subunit. Contacts the 5S and 23S rRNAs.

Its function is as follows. This is one of the proteins that bind and probably mediate the attachment of the 5S RNA into the large ribosomal subunit, where it forms part of the central protuberance. This Saccharolobus islandicus (strain L.S.2.15 / Lassen #1) (Sulfolobus islandicus) protein is Large ribosomal subunit protein uL18.